We begin with the raw amino-acid sequence, 365 residues long: Phospho-N-acetylmuramoyl-pentapeptide-transferase (365 aa).

Helical transmembrane passes span 29–49 (VGGL…IIVW), 73–93 (GTPT…VIIW), 97–117 (SNIY…LGLV), 133–153 (ILNK…IMFI), 171–191 (IVCK…VGTS), 202–222 (GLVI…TWVV), 242–262 (LVVV…FNSY), 266–286 (IFMG…VSIL), 291–311 (YLLL…IFQV), and 341–361 (IVVR…VIFI).

The protein belongs to the glycosyltransferase 4 family. MraY subfamily. Mg(2+) is required as a cofactor.

It is found in the cell inner membrane. The catalysed reaction is UDP-N-acetyl-alpha-D-muramoyl-L-alanyl-gamma-D-glutamyl-meso-2,6-diaminopimeloyl-D-alanyl-D-alanine + di-trans,octa-cis-undecaprenyl phosphate = di-trans,octa-cis-undecaprenyl diphospho-N-acetyl-alpha-D-muramoyl-L-alanyl-D-glutamyl-meso-2,6-diaminopimeloyl-D-alanyl-D-alanine + UMP. The protein operates within cell wall biogenesis; peptidoglycan biosynthesis. Catalyzes the initial step of the lipid cycle reactions in the biosynthesis of the cell wall peptidoglycan: transfers peptidoglycan precursor phospho-MurNAc-pentapeptide from UDP-MurNAc-pentapeptide onto the lipid carrier undecaprenyl phosphate, yielding undecaprenyl-pyrophosphoryl-MurNAc-pentapeptide, known as lipid I. The protein is Phospho-N-acetylmuramoyl-pentapeptide-transferase of Blochmanniella floridana.